Consider the following 3187-residue polypeptide: Cilia- and flagella-associated protein 47 (3187 aa).

Residues 1746-1869 form the Calponin-homology (CH) domain; that stretch reads SDSERILLSW…LCVYMYERLP (124 aa). The tract at residues 2024–2052 is disordered; the sequence is KLTESRQYPKHDDDMSSSGSDTDQGCSDS. Positions 2026–2037 are enriched in basic and acidic residues; it reads TESRQYPKHDDD.

In terms of assembly, interacts with CFAP65. In terms of tissue distribution, highly expressed in spermatzoa (at protein level).

It localises to the cytoplasm. The protein resides in the cytoskeleton. It is found in the flagellum basal body. Its function is as follows. Plays a role in flagellar formation and sperm motility. The chain is Cilia- and flagella-associated protein 47 from Homo sapiens (Human).